Reading from the N-terminus, the 65-residue chain is Large ribosomal subunit protein uL29 (65 aa).

The protein belongs to the universal ribosomal protein uL29 family.

In Syntrophus aciditrophicus (strain SB), this protein is Large ribosomal subunit protein uL29.